Consider the following 506-residue polypeptide: Maturase K (506 aa).

Belongs to the intron maturase 2 family. MatK subfamily.

Its subcellular location is the plastid. It localises to the chloroplast. Functionally, usually encoded in the trnK tRNA gene intron. Probably assists in splicing its own and other chloroplast group II introns. In Uncarina grandidieri (Mouse trap tree), this protein is Maturase K.